Consider the following 408-residue polypeptide: Bifunctional enzyme IspD/IspF (408 aa).

The segment at 1 to 247 (MNAPFEKDRR…GPAMTELPDI (247 aa)) is 2-C-methyl-D-erythritol 4-phosphate cytidylyltransferase. Positions 248–408 (RVGNGYDVHG…TVAYPGSLGN (161 aa)) are 2-C-methyl-D-erythritol 2,4-cyclodiphosphate synthase. A divalent metal cation is bound by residues Asp-254 and His-256. 4-CDP-2-C-methyl-D-erythritol 2-phosphate contacts are provided by residues 254–256 (DVH) and 280–281 (HS). His-288 is a binding site for a divalent metal cation. 4-CDP-2-C-methyl-D-erythritol 2-phosphate contacts are provided by residues 302–304 (DIG), 378–381 (TTNE), Phe-385, and Arg-388.

This sequence in the N-terminal section; belongs to the IspD/TarI cytidylyltransferase family. IspD subfamily. It in the C-terminal section; belongs to the IspF family. Requires a divalent metal cation as cofactor.

It catalyses the reaction 2-C-methyl-D-erythritol 4-phosphate + CTP + H(+) = 4-CDP-2-C-methyl-D-erythritol + diphosphate. It carries out the reaction 4-CDP-2-C-methyl-D-erythritol 2-phosphate = 2-C-methyl-D-erythritol 2,4-cyclic diphosphate + CMP. Its pathway is isoprenoid biosynthesis; isopentenyl diphosphate biosynthesis via DXP pathway; isopentenyl diphosphate from 1-deoxy-D-xylulose 5-phosphate: step 2/6. It participates in isoprenoid biosynthesis; isopentenyl diphosphate biosynthesis via DXP pathway; isopentenyl diphosphate from 1-deoxy-D-xylulose 5-phosphate: step 4/6. In terms of biological role, bifunctional enzyme that catalyzes the formation of 4-diphosphocytidyl-2-C-methyl-D-erythritol from CTP and 2-C-methyl-D-erythritol 4-phosphate (MEP) (IspD), and catalyzes the conversion of 4-diphosphocytidyl-2-C-methyl-D-erythritol 2-phosphate (CDP-ME2P) to 2-C-methyl-D-erythritol 2,4-cyclodiphosphate (ME-CPP) with a corresponding release of cytidine 5-monophosphate (CMP) (IspF). The chain is Bifunctional enzyme IspD/IspF from Chelativorans sp. (strain BNC1).